Reading from the N-terminus, the 226-residue chain is Cytidylate kinase (226 aa).

10 to 18 (GPASSGKST) provides a ligand contact to ATP.

Belongs to the cytidylate kinase family. Type 1 subfamily.

It localises to the cytoplasm. The enzyme catalyses CMP + ATP = CDP + ADP. It carries out the reaction dCMP + ATP = dCDP + ADP. This is Cytidylate kinase from Streptococcus thermophilus (strain CNRZ 1066).